Here is an 89-residue protein sequence, read N- to C-terminus: Small ribosomal subunit protein uS15 (89 aa).

It belongs to the universal ribosomal protein uS15 family. As to quaternary structure, part of the 30S ribosomal subunit. Forms a bridge to the 50S subunit in the 70S ribosome, contacting the 23S rRNA.

In terms of biological role, one of the primary rRNA binding proteins, it binds directly to 16S rRNA where it helps nucleate assembly of the platform of the 30S subunit by binding and bridging several RNA helices of the 16S rRNA. Functionally, forms an intersubunit bridge (bridge B4) with the 23S rRNA of the 50S subunit in the ribosome. The polypeptide is Small ribosomal subunit protein uS15 (Pseudomonas putida (strain ATCC 700007 / DSM 6899 / JCM 31910 / BCRC 17059 / LMG 24140 / F1)).